A 429-amino-acid polypeptide reads, in one-letter code: Enolase (429 aa).

Residue Q163 participates in (2R)-2-phosphoglycerate binding. The Proton donor role is filled by E205. Mg(2+)-binding residues include D242, E285, and D312. Positions 337, 366, 367, and 388 each coordinate (2R)-2-phosphoglycerate. The Proton acceptor role is filled by K337.

This sequence belongs to the enolase family. Mg(2+) is required as a cofactor.

It is found in the cytoplasm. The protein localises to the secreted. Its subcellular location is the cell surface. It carries out the reaction (2R)-2-phosphoglycerate = phosphoenolpyruvate + H2O. The protein operates within carbohydrate degradation; glycolysis; pyruvate from D-glyceraldehyde 3-phosphate: step 4/5. Functionally, catalyzes the reversible conversion of 2-phosphoglycerate (2-PG) into phosphoenolpyruvate (PEP). It is essential for the degradation of carbohydrates via glycolysis. This chain is Enolase, found in Methylorubrum extorquens (strain CM4 / NCIMB 13688) (Methylobacterium extorquens).